The chain runs to 89 residues: Small ribosomal subunit protein uS15 (89 aa).

The segment at 1-23 (MALTKERTASVVQQYGSGEKDTG) is disordered.

Belongs to the universal ribosomal protein uS15 family. As to quaternary structure, part of the 30S ribosomal subunit. Forms a bridge to the 50S subunit in the 70S ribosome, contacting the 23S rRNA.

In terms of biological role, one of the primary rRNA binding proteins, it binds directly to 16S rRNA where it helps nucleate assembly of the platform of the 30S subunit by binding and bridging several RNA helices of the 16S rRNA. Forms an intersubunit bridge (bridge B4) with the 23S rRNA of the 50S subunit in the ribosome. The polypeptide is Small ribosomal subunit protein uS15 (Treponema pallidum (strain Nichols)).